Consider the following 1012-residue polypeptide: RAS protein activator like-3 (1012 aa).

Disordered stretches follow at residues 1 to 128 (MDPP…TPDV), 147 to 196 (GNED…QIHN), and 208 to 229 (KKAKSELGASASRDGPPSALGS). A compositionally biased stretch (polar residues) spans 7 to 21 (SRASQTQPVAPSPLT). Residue Ser-18 is modified to Phosphoserine. Residues 27 to 39 (SGGGAEKGAGGFR) show a composition bias toward gly residues. Residues 50 to 62 (QSHQETTASSQPA) show a composition bias toward polar residues. A Phosphoserine modification is found at Ser-51. Residues 100–113 (SEPEPENPEPEPEL) show a composition bias toward acidic residues. Ser-160, Ser-162, Ser-163, and Ser-166 each carry phosphoserine. Over residues 160-171 (SASSESSIHVAS) the composition is skewed to low complexity. Residues 175–186 (KDPDRTPGKTDP) show a composition bias toward basic and acidic residues. A PH domain is found at 193 to 294 (QIHNVRGLLK…WIEDLRRHFQ (102 aa)). Phosphoserine is present on residues Ser-212, Ser-225, Ser-229, and Ser-232. Phosphothreonine is present on Thr-235. Residues 285–405 (WIEDLRRHFQ…APAAGLERWF (121 aa)) form the C2 domain. The region spanning 475 to 683 (GRAQALVTDL…PAMQHFLDQV (209 aa)) is the Ras-GAP domain. The interval 752–887 (PAPRTQGHSS…DKDQALGTHR (136 aa)) is disordered. Phosphoserine is present on residues Ser-788 and Ser-791. Residues 826-841 (PARRRPSAGPRPRPKG) show a composition bias toward basic residues. A coiled-coil region spans residues 889–989 (VGKLAELQCE…KDTIQNLQLL (101 aa)). Residues 990-999 (PRTSESQSQP) show a composition bias toward polar residues. The interval 990–1012 (PRTSESQSQPVPLKAPCINGDTT) is disordered.

It is found in the cytoplasm. The protein localises to the cell cortex. Functionally, functions as a Ras GTPase-activating protein. Plays an important role in the expansion and functions of natural killer T (NKT) cells in the liver by negatively regulating RAS activity and the down-stream ERK signaling pathway. The sequence is that of RAS protein activator like-3 (RASAL3) from Bos taurus (Bovine).